An 89-amino-acid polypeptide reads, in one-letter code: Small ribosomal subunit protein uS15 (89 aa).

Basic and acidic residues predominate over residues 1-21 (MSITTEEKARVMKEYGTKDGD). Positions 1 to 24 (MSITTEEKARVMKEYGTKDGDTGS) are disordered.

Belongs to the universal ribosomal protein uS15 family. As to quaternary structure, part of the 30S ribosomal subunit. Forms a bridge to the 50S subunit in the 70S ribosome, contacting the 23S rRNA.

In terms of biological role, one of the primary rRNA binding proteins, it binds directly to 16S rRNA where it helps nucleate assembly of the platform of the 30S subunit by binding and bridging several RNA helices of the 16S rRNA. Functionally, forms an intersubunit bridge (bridge B4) with the 23S rRNA of the 50S subunit in the ribosome. In Ruegeria pomeroyi (strain ATCC 700808 / DSM 15171 / DSS-3) (Silicibacter pomeroyi), this protein is Small ribosomal subunit protein uS15.